Here is a 466-residue protein sequence, read N- to C-terminus: Uronate isomerase (466 aa).

The protein belongs to the metallo-dependent hydrolases superfamily. Uronate isomerase family.

The catalysed reaction is D-glucuronate = D-fructuronate. It carries out the reaction aldehydo-D-galacturonate = keto-D-tagaturonate. It participates in carbohydrate metabolism; pentose and glucuronate interconversion. This Brucella melitensis biotype 1 (strain ATCC 23456 / CCUG 17765 / NCTC 10094 / 16M) protein is Uronate isomerase (uxaC).